The primary structure comprises 139 residues: D-ribose pyranase (139 aa).

Catalysis depends on histidine 20, which acts as the Proton donor. Substrate contacts are provided by residues aspartate 28, histidine 106, and 128–130 (YAN).

It belongs to the RbsD / FucU family. RbsD subfamily. In terms of assembly, homodecamer.

It localises to the cytoplasm. The enzyme catalyses beta-D-ribopyranose = beta-D-ribofuranose. It functions in the pathway carbohydrate metabolism; D-ribose degradation; D-ribose 5-phosphate from beta-D-ribopyranose: step 1/2. Its function is as follows. Catalyzes the interconversion of beta-pyran and beta-furan forms of D-ribose. The sequence is that of D-ribose pyranase from Haemophilus influenzae (strain PittGG).